A 464-amino-acid polypeptide reads, in one-letter code: Arginine biosynthesis bifunctional protein ArgJ, mitochondrial (464 aa).

Positions 191, 220, 231, 318, 459, and 464 each coordinate substrate. The active-site Nucleophile is the threonine 231.

It belongs to the ArgJ family. As to quaternary structure, heterodimer of an alpha and a beta chain. Post-translationally, the alpha and beta chains are autoproteolytically processed from a single precursor protein within the mitochondrion.

It localises to the mitochondrion matrix. It carries out the reaction N(2)-acetyl-L-ornithine + L-glutamate = N-acetyl-L-glutamate + L-ornithine. The catalysed reaction is L-glutamate + acetyl-CoA = N-acetyl-L-glutamate + CoA + H(+). It functions in the pathway amino-acid biosynthesis; L-arginine biosynthesis; L-ornithine and N-acetyl-L-glutamate from L-glutamate and N(2)-acetyl-L-ornithine (cyclic): step 1/1. The protein operates within amino-acid biosynthesis; L-arginine biosynthesis; N(2)-acetyl-L-ornithine from L-glutamate: step 1/4. Functionally, catalyzes two activities which are involved in the cyclic version of arginine biosynthesis: the synthesis of acetylglutamate from glutamate and acetyl-CoA, and of ornithine by transacetylation between acetylornithine and glutamate. This Pyricularia oryzae (strain 70-15 / ATCC MYA-4617 / FGSC 8958) (Rice blast fungus) protein is Arginine biosynthesis bifunctional protein ArgJ, mitochondrial.